The sequence spans 264 residues: tRNA pseudouridine synthase A (264 aa).

Residue D52 is the Nucleophile of the active site. Y110 is a binding site for substrate.

It belongs to the tRNA pseudouridine synthase TruA family. In terms of assembly, homodimer.

The enzyme catalyses uridine(38/39/40) in tRNA = pseudouridine(38/39/40) in tRNA. Its function is as follows. Formation of pseudouridine at positions 38, 39 and 40 in the anticodon stem and loop of transfer RNAs. This is tRNA pseudouridine synthase A from Wigglesworthia glossinidia brevipalpis.